Consider the following 134-residue polypeptide: Small ribosomal subunit protein uS12 (134 aa).

Positions 1 to 30 (MPTINQLVKHGREKVKEKSKSPALQGHPQK) are disordered. A 3-methylthioaspartic acid modification is found at D89. Residues 106 to 134 (GVENRRQSRSKYGAKRPKAGAAAGAKGKK) form a disordered region. Basic residues predominate over residues 112-123 (QSRSKYGAKRPK). A compositionally biased stretch (low complexity) spans 124–134 (AGAAAGAKGKK).

This sequence belongs to the universal ribosomal protein uS12 family. In terms of assembly, part of the 30S ribosomal subunit. Contacts proteins S8 and S17. May interact with IF1 in the 30S initiation complex.

Its function is as follows. With S4 and S5 plays an important role in translational accuracy. In terms of biological role, interacts with and stabilizes bases of the 16S rRNA that are involved in tRNA selection in the A site and with the mRNA backbone. Located at the interface of the 30S and 50S subunits, it traverses the body of the 30S subunit contacting proteins on the other side and probably holding the rRNA structure together. The combined cluster of proteins S8, S12 and S17 appears to hold together the shoulder and platform of the 30S subunit. This Fervidobacterium nodosum (strain ATCC 35602 / DSM 5306 / Rt17-B1) protein is Small ribosomal subunit protein uS12.